A 235-amino-acid chain; its full sequence is RAD9, HUS1, RAD1-interacting nuclear orphan protein 1 (235 aa).

S50 bears the Phosphoserine mark. The RAD1-binding motif motif lies at 54–60; that stretch reads SWVSPQF. 3 disordered regions span residues 75–106, 111–130, and 149–198; these read HRDQ…SETL, RVQP…VPLF, and VFAP…LVKD. Polar residues predominate over residues 96–106; that stretch reads ESPQSSSSETL. The short motif at 123–130 is the D-box element; that stretch reads RRPLVPLF. The span at 161–173 shows a compositional bias: basic and acidic residues; sequence SVRDDPISPDQKE. A KEN box motif is present at residues 171–175; sequence QKENS.

Interacts (when phosphorylated by PLK1) with POLQ; promoting POLQ recruitment to DNA damage sites. Interacts with RAD1; interaction is direct and promotes association with the 9-1-1 (RAD9-RAD1-HUS1) complex. Interacts with RAD18. Interacts with TOPBP1. Interacts with UBE2N. In terms of processing, phosphorylated at Ser-50 by PLK1, promoting interaction with polymerase theta (POLQ). Post-translationally, ubiquitinated and degraded by the APC/C complex upon mitotic exit.

The protein localises to the nucleus. The protein resides in the chromosome. Involved in microhomology-mediated end-joining (MMEJ) DNA repair by promoting recruitment of polymerase theta (POLQ) to DNA damage sites during mitosis. MMEJ is an alternative non-homologous end-joining (NHEJ) machinery that takes place during mitosis to repair double-strand breaks in DNA that originate in S-phase. Accumulates in M-phase; following phosphorylation by PLK1, interacts with POLQ, enabling its recruitment to double-strand breaks for subsequent repair. Also involved in the DNA damage response (DDR) signaling in response to genotoxic stresses such as ionizing radiation (IR) during the S phase. Recruited to sites of DNA damage through interaction with the 9-1-1 cell-cycle checkpoint response complex and TOPBP1 in a ATR-dependent manner. Required for the progression of the G1 to S phase transition. Plays a role in the stimulation of CHEK1 phosphorylation. The protein is RAD9, HUS1, RAD1-interacting nuclear orphan protein 1 (Rhno1) of Mus musculus (Mouse).